Reading from the N-terminus, the 481-residue chain is PTS system N-acetylmuramic acid-specific EIIBC component (481 aa).

The PTS EIIB type-1 domain occupies 1-89 (MAKITQTMMA…NALIESGDNV (89 aa)). Cysteine 28 acts as the Phosphocysteine intermediate; for EIIB activity in catalysis. A PTS EIIC type-1 domain is found at 122–481 (SKFATIFTPL…FFGCKDVDLS (360 aa)). 10 helical membrane-spanning segments follow: residues 124–144 (FATI…LLGI), 165–185 (LVAY…ILIG), 190–210 (QAFG…VLGY), 225–245 (FFGF…AAIL), 263–283 (MILT…LIIM), 307–327 (AAIL…QGFV), 342–362 (LFPI…ALYA), 376–396 (GAII…VTLP), 406–426 (IGGA…LPVG), and 448–468 (IFAG…VGFA).

It is found in the cell inner membrane. The catalysed reaction is N-acetyl-beta-D-muramate(out) + N(pros)-phospho-L-histidyl-[protein] = N-acetyl-beta-D-muramate 6-phosphate(in) + L-histidyl-[protein]. The phosphoenolpyruvate-dependent sugar phosphotransferase system (sugar PTS), a major carbohydrate active transport system, catalyzes the phosphorylation of incoming sugar substrates concomitantly with their translocation across the cell membrane. This system is involved in N-acetylmuramic acid (MurNAc) transport, yielding cytoplasmic MurNAc-6-P. Is also able to take up anhydro-N-acetylmuramic acid (anhMurNAc), but cannot phosphorylate the carbon 6, probably because of the 1,6-anhydro ring. This chain is PTS system N-acetylmuramic acid-specific EIIBC component (murP), found in Vibrio cholerae serotype O1 (strain ATCC 39315 / El Tor Inaba N16961).